The chain runs to 187 residues: Cell division protein SepF (187 aa).

Belongs to the SepF family. Homodimer. Interacts with FtsZ.

It is found in the cytoplasm. Cell division protein that is part of the divisome complex and is recruited early to the Z-ring. Probably stimulates Z-ring formation, perhaps through the cross-linking of FtsZ protofilaments. Its function overlaps with FtsA. This is Cell division protein SepF from Streptococcus suis (strain 98HAH33).